The following is a 176-amino-acid chain: Cytochrome b (176 aa).

3 helical membrane passes run 33 to 53, 77 to 98, and 113 to 133; these read FGSL…FLAM, WLLR…YLHV, and WNMG…GYVL. Heme b is bound by residues histidine 83 and histidine 97.

It belongs to the cytochrome b family. In terms of assembly, the cytochrome bc1 complex contains 11 subunits: 3 respiratory subunits (MT-CYB, CYC1 and UQCRFS1), 2 core proteins (UQCRC1 and UQCRC2) and 6 low-molecular weight proteins (UQCRH/QCR6, UQCRB/QCR7, UQCRQ/QCR8, UQCR10/QCR9, UQCR11/QCR10 and a cleavage product of UQCRFS1). This cytochrome bc1 complex then forms a dimer. Heme b serves as cofactor.

The protein resides in the mitochondrion inner membrane. In terms of biological role, component of the ubiquinol-cytochrome c reductase complex (complex III or cytochrome b-c1 complex) that is part of the mitochondrial respiratory chain. The b-c1 complex mediates electron transfer from ubiquinol to cytochrome c. Contributes to the generation of a proton gradient across the mitochondrial membrane that is then used for ATP synthesis. The protein is Cytochrome b (MT-CYB) of Tomopeas ravum (Blunt-eared bat).